The chain runs to 99 residues: Aspartyl/glutamyl-tRNA(Asn/Gln) amidotransferase subunit C (99 aa).

It belongs to the GatC family. In terms of assembly, heterotrimer of A, B and C subunits.

The enzyme catalyses L-glutamyl-tRNA(Gln) + L-glutamine + ATP + H2O = L-glutaminyl-tRNA(Gln) + L-glutamate + ADP + phosphate + H(+). The catalysed reaction is L-aspartyl-tRNA(Asn) + L-glutamine + ATP + H2O = L-asparaginyl-tRNA(Asn) + L-glutamate + ADP + phosphate + 2 H(+). Allows the formation of correctly charged Asn-tRNA(Asn) or Gln-tRNA(Gln) through the transamidation of misacylated Asp-tRNA(Asn) or Glu-tRNA(Gln) in organisms which lack either or both of asparaginyl-tRNA or glutaminyl-tRNA synthetases. The reaction takes place in the presence of glutamine and ATP through an activated phospho-Asp-tRNA(Asn) or phospho-Glu-tRNA(Gln). This Kineococcus radiotolerans (strain ATCC BAA-149 / DSM 14245 / SRS30216) protein is Aspartyl/glutamyl-tRNA(Asn/Gln) amidotransferase subunit C.